Here is a 129-residue protein sequence, read N- to C-terminus: Small ribosomal subunit protein uS9 (129 aa).

Residues 98–129 (KAQGFLTRDPRKKERKKYGRKKARKSFQFSKR) form a disordered region. Basic residues predominate over residues 110 to 129 (KERKKYGRKKARKSFQFSKR).

The protein belongs to the universal ribosomal protein uS9 family.

This is Small ribosomal subunit protein uS9 from Chlamydia trachomatis serovar L2 (strain ATCC VR-902B / DSM 19102 / 434/Bu).